The chain runs to 2550 residues: Highly reducing polyketide synthase otaA (2550 aa).

Residues 9-431 enclose the Ketosynthase family 3 (KS3) domain; it reads SEPLAIIGLA…GTNAHAVVED (423 aa). Residues cysteine 182, histidine 317, and histidine 355 each act as for beta-ketoacyl synthase activity in the active site. A malonyl-CoA:ACP transacylase (MAT) domain region spans residues 572–894; it reads FVFTGQGANW…KRYETNGSTI (323 aa). The tract at residues 959-1094 is N-terminal hotdog fold; it reads HELLGVPVED…GSVRAETGPP (136 aa). The interval 959–1252 is dehydratase (DH) domain; it reads HELLGVPVED…DLVQLPANND (294 aa). The PKS/mFAS DH domain occupies 959–1253; sequence HELLGVPVED…LVQLPANNDD (295 aa). A C-terminal hotdog fold region spans residues 1107–1253; that stretch reads AEPVDIAQMY…LVQLPANNDD (147 aa). The S-adenosyl-L-methionine site is built by isoleucine 1420 and glutamate 1442. Residues 1433–1612 are methyltransferase (CMeT) domain; that stretch reads HAQTGIKILE…GLRPRLIIND (180 aa). The enoyl reductase (ER) (ER) domain stretch occupies residues 1859 to 1919; that stretch reads PDEVKIRIHA…DQVMALRTGP (61 aa). Residues 2166–2345 form a ketoreductase (KR) domain region; that stretch reads ASYLLIGGFG…PATSVSLGSV (180 aa). The 78-residue stretch at 2454-2531 folds into the Carrier domain; sequence AAVEVVTRAI…QLAQQAADAS (78 aa). O-(pantetheine 4'-phosphoryl)serine is present on serine 2491.

Requires pantetheine 4'-phosphate as cofactor.

It catalyses the reaction 4 malonyl-CoA + acetyl-CoA + 5 NADPH + 9 H(+) = 7-methylmellein + 3 CO2 + 5 NADP(+) + 5 CoA + 4 H2O. It functions in the pathway mycotoxin biosynthesis. Functionally, highly reducing polyketide synthase; part of the gene cluster that mediates the biosynthesis of ochratoxin A (OTA), a mycotoxin composed of a chlorinated type I polyketide dihydroisocoumarin moiety linked to L-phenylalanine, and demonstrated to have nephrotoxic, immunotoxic, genotoxic, neurotoxic, and teratogenic properties. OtaA catalyzes the condensation of one acetate and 4 malonate units to form the isocoumarin group. The pathway begins with the highly reducing polyketide synthase otaA that catalyzes the formation of the isocoumarin group during the initial stages of biosynthesis, starting from one acetate and 4 malonate units, to originate the characteristic pentaketide skeleton 7-methylmellein (7-MM) of the OTA molecule. The newly identified cyclase otaY might be involved in the polyketide cyclization reaction during the initial steps of the OTA biosynthesis. 7-MM is then oxidized into 7-carboxymellein (also called ochratoxin beta) by the cytochrome P450 monooxygenase otaC. The NRPS encoded by the otaB gene is involved in the linking of phenylalanine to the dihydroisocoumarin ring. The reaction catalyzed by NRPS results in the production of ochratoxin B (OTB), which is the non-chlorinated analog of OTA and which subsequently serves as the substrate of the halogenase otaD for chlorination activity to form the final molecular structure of OTA, containing a chlorine atom in the C-5 position of the molecule. This chain is Highly reducing polyketide synthase otaA, found in Aspergillus niger (strain ATCC MYA-4892 / CBS 513.88 / FGSC A1513).